The chain runs to 72 residues: NAD(P)H-quinone oxidoreductase subunit O (72 aa).

It belongs to the complex I NdhO subunit family. In terms of assembly, NDH-1 can be composed of about 15 different subunits; different subcomplexes with different compositions have been identified which probably have different functions.

The protein resides in the cellular thylakoid membrane. It catalyses the reaction a plastoquinone + NADH + (n+1) H(+)(in) = a plastoquinol + NAD(+) + n H(+)(out). The enzyme catalyses a plastoquinone + NADPH + (n+1) H(+)(in) = a plastoquinol + NADP(+) + n H(+)(out). Its function is as follows. NDH-1 shuttles electrons from an unknown electron donor, via FMN and iron-sulfur (Fe-S) centers, to quinones in the respiratory and/or the photosynthetic chain. The immediate electron acceptor for the enzyme in this species is believed to be plastoquinone. Couples the redox reaction to proton translocation, and thus conserves the redox energy in a proton gradient. Cyanobacterial NDH-1 also plays a role in inorganic carbon-concentration. The sequence is that of NAD(P)H-quinone oxidoreductase subunit O from Trichodesmium erythraeum (strain IMS101).